We begin with the raw amino-acid sequence, 498 residues long: ATP synthase subunit beta, chloroplastic (498 aa).

ATP is bound at residue 172-179 (GGAGVGKT).

Belongs to the ATPase alpha/beta chains family. As to quaternary structure, F-type ATPases have 2 components, CF(1) - the catalytic core - and CF(0) - the membrane proton channel. CF(1) has five subunits: alpha(3), beta(3), gamma(1), delta(1), epsilon(1). CF(0) has four main subunits: a(1), b(1), b'(1) and c(9-12).

The protein resides in the plastid. It localises to the chloroplast thylakoid membrane. The enzyme catalyses ATP + H2O + 4 H(+)(in) = ADP + phosphate + 5 H(+)(out). Its function is as follows. Produces ATP from ADP in the presence of a proton gradient across the membrane. The catalytic sites are hosted primarily by the beta subunits. The chain is ATP synthase subunit beta, chloroplastic from Aristolochia macrophylla (Dutchman's pipe vine).